The primary structure comprises 125 residues: Translation initiation factor 5A (125 aa).

Lysine 36 carries the post-translational modification Hypusine.

The protein belongs to the eIF-5A family.

It is found in the cytoplasm. Functions by promoting the formation of the first peptide bond. The protein is Translation initiation factor 5A (eIF5A) of Halorubrum lacusprofundi (strain ATCC 49239 / DSM 5036 / JCM 8891 / ACAM 34).